Here is a 229-residue protein sequence, read N- to C-terminus: Large ribosomal subunit protein uL1 (229 aa).

As to quaternary structure, part of the 50S ribosomal subunit.

Binds directly to 23S rRNA. The L1 stalk is quite mobile in the ribosome, and is involved in E site tRNA release. Its function is as follows. Protein L1 is also a translational repressor protein, it controls the translation of the L11 operon by binding to its mRNA. The polypeptide is Large ribosomal subunit protein uL1 (Rhodopseudomonas palustris (strain ATCC BAA-98 / CGA009)).